The sequence spans 122 residues: Large ribosomal subunit protein uL14 (122 aa).

It belongs to the universal ribosomal protein uL14 family. As to quaternary structure, part of the 50S ribosomal subunit. Forms a cluster with proteins L3 and L19. In the 70S ribosome, L14 and L19 interact and together make contacts with the 16S rRNA in bridges B5 and B8.

In terms of biological role, binds to 23S rRNA. Forms part of two intersubunit bridges in the 70S ribosome. The chain is Large ribosomal subunit protein uL14 from Kineococcus radiotolerans (strain ATCC BAA-149 / DSM 14245 / SRS30216).